A 929-amino-acid chain; its full sequence is Collagen alpha-1(XII) chain (929 aa).

Residues 1-49 (DVEIFAVGVKDAVRSELEAIATPPTATHVYTVEDFDAFQRISFELTQSI) enclose the VWFA 1 domain. 6 Fibronectin type-III domains span residues 67-156 (PPRD…LEVR), 158-250 (APRN…VGEP), 251-340 (KNLR…LQER), 342-432 (SPRD…ASPD), 434-521 (KIVK…LSPF), and 523-613 (APRS…TLRD). The N-linked (GlcNAc...) asparagine glycan is linked to Asn-98. O-linked (Xyl...) (chondroitin sulfate) serine glycans are attached at residues Ser-231, Ser-324, and Ser-415. The VWFA 2 domain maps to 633-805 (DIVLLVDGSW…SLLTNIVNDL (173 aa)). Positions 821–910 (PPSNLVTSEP…AGTETTLPIP (90 aa)) constitute a Fibronectin type-III 7 domain.

It belongs to the fibril-associated collagens with interrupted helices (FACIT) family. In terms of assembly, trimer of identical chains each containing 190 kDa of non-triple-helical sequences. Post-translationally, the triple-helical tail is stabilized by disulfide bonds at each end. In terms of processing, prolines at the third position of the tripeptide repeating unit (G-X-Y) are hydroxylated in some or all of the chains.

Its subcellular location is the secreted. The protein localises to the extracellular space. It is found in the extracellular matrix. Functionally, type XII collagen interacts with type I collagen-containing fibrils, the COL1 domain could be associated with the surface of the fibrils, and the COL2 and NC3 domains may be localized in the perifibrillar matrix. Could play a developmental role in regeneration. The protein is Collagen alpha-1(XII) chain of Notophthalmus viridescens (Eastern newt).